The primary structure comprises 358 residues: UDP-N-acetylglucosamine--N-acetylmuramyl-(pentapeptide) pyrophosphoryl-undecaprenol N-acetylglucosamine transferase (358 aa).

UDP-N-acetyl-alpha-D-glucosamine-binding positions include 11–13, Asn120, Arg161, Ser188, and Gln282; that span reads TGG.

The protein belongs to the glycosyltransferase 28 family. MurG subfamily.

It is found in the cell inner membrane. The enzyme catalyses di-trans,octa-cis-undecaprenyl diphospho-N-acetyl-alpha-D-muramoyl-L-alanyl-D-glutamyl-meso-2,6-diaminopimeloyl-D-alanyl-D-alanine + UDP-N-acetyl-alpha-D-glucosamine = di-trans,octa-cis-undecaprenyl diphospho-[N-acetyl-alpha-D-glucosaminyl-(1-&gt;4)]-N-acetyl-alpha-D-muramoyl-L-alanyl-D-glutamyl-meso-2,6-diaminopimeloyl-D-alanyl-D-alanine + UDP + H(+). It participates in cell wall biogenesis; peptidoglycan biosynthesis. Functionally, cell wall formation. Catalyzes the transfer of a GlcNAc subunit on undecaprenyl-pyrophosphoryl-MurNAc-pentapeptide (lipid intermediate I) to form undecaprenyl-pyrophosphoryl-MurNAc-(pentapeptide)GlcNAc (lipid intermediate II). The polypeptide is UDP-N-acetylglucosamine--N-acetylmuramyl-(pentapeptide) pyrophosphoryl-undecaprenol N-acetylglucosamine transferase (Synechococcus sp. (strain WH7803)).